The following is an 812-amino-acid chain: Lon protease (812 aa).

The Lon N-terminal domain occupies 12–205 (LPMLPLRGVL…YLCELLAKEM (194 aa)). 357 to 364 (GPPGVGKT) contacts ATP. The Lon proteolytic domain occupies 593-774 (ENQVGVATGL…DEVLEETLLK (182 aa)). Residues S680 and K723 contribute to the active site.

It belongs to the peptidase S16 family. In terms of assembly, homohexamer. Organized in a ring with a central cavity.

The protein localises to the cytoplasm. It catalyses the reaction Hydrolysis of proteins in presence of ATP.. ATP-dependent serine protease that mediates the selective degradation of mutant and abnormal proteins as well as certain short-lived regulatory proteins. Required for cellular homeostasis and for survival from DNA damage and developmental changes induced by stress. Degrades polypeptides processively to yield small peptide fragments that are 5 to 10 amino acids long. Binds to DNA in a double-stranded, site-specific manner. The protein is Lon protease of Syntrophomonas wolfei subsp. wolfei (strain DSM 2245B / Goettingen).